Consider the following 488-residue polypeptide: Pre-glycoprotein polyprotein GP complex (488 aa).

Residue G2 is the site of N-myristoyl glycine; by host attachment. Over 2 to 17 (GQLFSFFEEVPNIIHE) the chain is Extracellular. The helical transmembrane segment at 18–32 (AINIALIAVSLIAAL) threads the bilayer. Residue K33 is a topological domain, cytoplasmic. A helical membrane pass occupies residues 34–53 (GMINLWKSGLFQLIFFLTLA). Extracellular segments lie at residues 54-58 (GRSCS) and 59-427 (FRIG…TLVD). Residue C57 coordinates Zn(2+). N-linked (GlcNAc...) asparagine; by host glycans are attached at residues N69, N88, N99, N125, N171, N178, and N222. 4 cysteine pairs are disulfide-bonded: C85/C229, C274/C287, C296/C305, and C359/C380. N-linked (GlcNAc...) asparagine; by host glycans are attached at residues N360, N368, N385, and N390. Residues 428-448 (ICFWSTLFFTTTLFLHLVGFP) traverse the membrane as a helical segment. The Cytoplasmic segment spans residues 449-488 (THRHIRGEPCPLPHRLNSRGGCRCGKYPELKKPITWHKNH). The Zn(2+) site is built by H450, H452, C458, H462, C470, C472, and H488.

This sequence belongs to the arenaviridae GPC protein family. Homotetramer; disulfide-linked. In terms of assembly, homotetramer. GP2 homotetramers bind through ionic interactions with GP1 homotetramers to form the GP complex together with the stable signal peptide. The GP-C polyprotein interacts with the host protease MBTPS1/SKI-1 resulting in the polyprotein processing. Specific enzymatic cleavages in vivo yield mature proteins. GP-C polyprotein is cleaved in the endoplasmic reticulum by the host protease MBTPS1. Only cleaved glycoprotein is incorporated into virions. Post-translationally, the SSP remains stably associated with the GP complex following cleavage by signal peptidase and plays crucial roles in the trafficking of GP through the secretory pathway. In terms of processing, myristoylation is necessary for GP2-mediated fusion activity.

The protein resides in the virion membrane. Its subcellular location is the host endoplasmic reticulum membrane. It localises to the host Golgi apparatus membrane. The protein localises to the host cell membrane. Its function is as follows. Interacts with the host receptor. Mediates virus attachment to host TFRC. This attachment induces virion internalization predominantly through clathrin-mediated endocytosis. Class I viral fusion protein that directs fusion of viral and host endosomal membranes, leading to delivery of the nucleocapsid into the cytoplasm. Membrane fusion is mediated by irreversible conformational changes induced upon acidification in the endosome. Functionally, stable signal peptide (SSP): cleaved and functions as a signal peptide. In addition, it is also retained as the third component of the GP complex. The SSP is required for efficient glycoprotein expression, post-translational maturation cleavage of GP1 and GP2, glycoprotein transport to the cell surface plasma membrane, formation of infectious virus particles, and acid pH-dependent glycoprotein-mediated cell fusion. In Homo sapiens (Human), this protein is Pre-glycoprotein polyprotein GP complex.